The following is a 68-amino-acid chain: Protein transport protein Sec61 subunit gamma (68 aa).

The Cytoplasmic portion of the chain corresponds to 1 to 32; the sequence is MDQVMAWVEPGKQFAKDSIRLVKRCTKPDRKE. A helical transmembrane segment spans residues 33 to 61; it reads FQKIAVATAIGFAIMGFIGFFVKLIHIPI. The Extracellular segment spans residues 62–68; sequence NNIIVGS.

This sequence belongs to the SecE/SEC61-gamma family. Heterotrimeric complex composed of SEC61-alpha, SEC61-beta and SEC61-gamma. Component of the ribosome-associated ER translocon complex.

It is found in the endoplasmic reticulum membrane. Its function is as follows. Necessary for protein translocation in the endoplasmic reticulum and multi-pass membrane protein biogenesis. In Ciona intestinalis (Transparent sea squirt), this protein is Protein transport protein Sec61 subunit gamma (SEC61G).